Consider the following 275-residue polypeptide: Dermonecrotic toxin SpeSicTox-betaIIA2ii (275 aa).

The active site involves His5. 2 residues coordinate Mg(2+): Glu25 and Asp27. His41 (nucleophile) is an active-site residue. 2 disulfides stabilise this stretch: Cys45-Cys51 and Cys47-Cys190. Asp85 is a binding site for Mg(2+).

The protein belongs to the arthropod phospholipase D family. Class II subfamily. It depends on Mg(2+) as a cofactor. In terms of tissue distribution, expressed by the venom gland.

Its subcellular location is the secreted. It carries out the reaction an N-(acyl)-sphingosylphosphocholine = an N-(acyl)-sphingosyl-1,3-cyclic phosphate + choline. The enzyme catalyses an N-(acyl)-sphingosylphosphoethanolamine = an N-(acyl)-sphingosyl-1,3-cyclic phosphate + ethanolamine. It catalyses the reaction a 1-acyl-sn-glycero-3-phosphocholine = a 1-acyl-sn-glycero-2,3-cyclic phosphate + choline. The catalysed reaction is a 1-acyl-sn-glycero-3-phosphoethanolamine = a 1-acyl-sn-glycero-2,3-cyclic phosphate + ethanolamine. In terms of biological role, dermonecrotic toxins cleave the phosphodiester linkage between the phosphate and headgroup of certain phospholipids (sphingolipid and lysolipid substrates), forming an alcohol (often choline) and a cyclic phosphate. This toxin acts on sphingomyelin (SM). It may also act on ceramide phosphoethanolamine (CPE), lysophosphatidylcholine (LPC) and lysophosphatidylethanolamine (LPE), but not on lysophosphatidylserine (LPS), and lysophosphatidylglycerol (LPG). It acts by transphosphatidylation, releasing exclusively cyclic phosphate products as second products. Induces dermonecrosis, hemolysis, increased vascular permeability, edema, inflammatory response, and platelet aggregation. In Sicarius peruensis (Six-eyed sand spider), this protein is Dermonecrotic toxin SpeSicTox-betaIIA2ii.